The primary structure comprises 509 residues: uncharacterized protein (509 aa).

An RNase NYN domain is found at 358 to 480; the sequence is RRIVIIDAIS…IIPFIVENGE (123 aa).

This is an uncharacterized protein from Methanocaldococcus jannaschii (strain ATCC 43067 / DSM 2661 / JAL-1 / JCM 10045 / NBRC 100440) (Methanococcus jannaschii).